The primary structure comprises 346 residues: Short-chain dehydrogenase/reductase bet4 (346 aa).

The segment at 1 to 35 is disordered; that stretch reads MTPAKAPSHAKKPEAGSQPISSMWTQMFPPKPTYT. NADP(+)-binding residues include Val-56, Lys-80, Asp-105, and Asn-132. The active-site Proton donor is the Ser-191. NADP(+) contacts are provided by Tyr-222 and Lys-226. Residue Tyr-222 is the Proton acceptor of the active site. Residue Lys-226 is the Lowers pKa of active site Tyr of the active site.

Belongs to the short-chain dehydrogenases/reductases (SDR) family.

It catalyses the reaction dehydroprobetaenone I + AH2 = probetaenone I + A. Its pathway is mycotoxin biosynthesis. Functionally, short-chain dehydrogenase/reductase; part of the gene cluster that mediates the biosynthesis of betaenones, phytotoxic polyketides involved in leaf spot disease in sugar beets. The first step of the pathway is the synthesis of dehydroprobetaenone I by the polyketide synthase bet1 and the enoyl reductase bet3 via condensation of one acetyl-CoA starter unit with 7 malonyl-CoA units and 5 methylations. The C-terminal reductase (R) domain of bet1 catalyzes the reductive release of the polyketide chain. Because bet1 lacks a designated enoylreductase (ER) domain, the required activity is provided the enoyl reductase bet3. The short-chain dehydrogenase/reductase bet4 then catalyzes reduction of dehydroprobetaenone I to probetaenone I. The cytochrome P450 monooxygenase bet2 catalyzes successive epoxidation, oxidation (resulting from epoxide opening) and hydroxylation to install a tertiary alcohol in the decaline ring to yield betaenone C from dehydroprobetaenone I and betaenone B from probetaenone I. The FAD-linked oxidoreductase (orf1) is probably responsible for the conversion of betaenone C to betaenone A via an intramolecular aldol reaction between C-1 and C-17 to form the bridged tricyclic system in betaenone A. This Neocamarosporium betae (Beet black rot fungus) protein is Short-chain dehydrogenase/reductase bet4.